We begin with the raw amino-acid sequence, 232 residues long: MRGEEEPAVAAAAYTTASKAGLLMELSPPNHESSPPTAGGGGGGGGDGAGGSSSAGASSSAGGGAATPQTPSRYEAQKRRDWNTFGQYLRNHRPPLGLAQCSGAHVLEFLRYLDQFGKTKVHTAACPFFGHPNPPAPCPCPLRQAWGSLDALVGRLRAAFEENGGRPESNPFAVRAVRLYLREVREHQARARGVSYEKKKRKKPQPADTSGGGGHPHPPPPPPPPPSAGAAC.

2 disordered regions span residues 20–77 and 189–232; these read AGLL…YEAQ and ARAR…GAAC. The segment covering 38-53 has biased composition (gly residues); the sequence is AGGGGGGGGDGAGGSS. The 128-residue stretch at 73–200 folds into the ALOG domain; that stretch reads RYEAQKRRDW…ARGVSYEKKK (128 aa). The Nuclear localization signal motif lies at 198–202; the sequence is KKKRK. The segment covering 216–232 has biased composition (pro residues); it reads PHPPPPPPPPPSAGAAC.

Belongs to the plant homeotic and developmental regulators ALOG protein family.

It localises to the nucleus. Its function is as follows. Probable transcription regulator that acts as a developmental regulator by promoting cell growth in response to light. The protein is Protein G1-like3 of Oryza sativa subsp. indica (Rice).